We begin with the raw amino-acid sequence, 445 residues long: Proline--tRNA ligase (445 aa).

This sequence belongs to the class-II aminoacyl-tRNA synthetase family. ProS type 2 subfamily. As to quaternary structure, homodimer.

The protein resides in the cytoplasm. It catalyses the reaction tRNA(Pro) + L-proline + ATP = L-prolyl-tRNA(Pro) + AMP + diphosphate. Its function is as follows. Catalyzes the attachment of proline to tRNA(Pro) in a two-step reaction: proline is first activated by ATP to form Pro-AMP and then transferred to the acceptor end of tRNA(Pro). In Caulobacter sp. (strain K31), this protein is Proline--tRNA ligase.